Reading from the N-terminus, the 330-residue chain is Beta-ketoacyl-[acyl-carrier-protein] synthase III (330 aa).

Active-site residues include Cys-114 and His-255. Positions 256–260 (QANQR) are ACP-binding. Asn-285 is an active-site residue.

The protein belongs to the thiolase-like superfamily. FabH family. As to quaternary structure, homodimer.

The protein localises to the cytoplasm. The enzyme catalyses malonyl-[ACP] + acetyl-CoA + H(+) = 3-oxobutanoyl-[ACP] + CO2 + CoA. It functions in the pathway lipid metabolism; fatty acid biosynthesis. In terms of biological role, catalyzes the condensation reaction of fatty acid synthesis by the addition to an acyl acceptor of two carbons from malonyl-ACP. Catalyzes the first condensation reaction which initiates fatty acid synthesis and may therefore play a role in governing the total rate of fatty acid production. Possesses both acetoacetyl-ACP synthase and acetyl transacylase activities. Its substrate specificity determines the biosynthesis of branched-chain and/or straight-chain of fatty acids. The chain is Beta-ketoacyl-[acyl-carrier-protein] synthase III from Trichormus variabilis (strain ATCC 29413 / PCC 7937) (Anabaena variabilis).